Here is a 606-residue protein sequence, read N- to C-terminus: CDPK-related kinase 8 (606 aa).

Positions 1–14 are enriched in polar residues; it reads MGGCTSKPSTSSGR. Residues 1-132 form a disordered region; it reads MGGCTSKPST…TEVPQREEEE (132 aa). Gly-2 carries N-myristoyl glycine lipidation. Residues 98 to 110 are compositionally biased toward basic residues; it reads KHIRAALRRRKGK. Residues 150 to 412 enclose the Protein kinase domain; that stretch reads VELGEEIGRG…ASQALMHPWI (263 aa). Residues 156-164 and Lys-182 contribute to the ATP site; that span reads IGRGHFGYT. Asp-278 (proton acceptor) is an active-site residue. Phosphoserine is present on Ser-318. The tract at residues 418-448 is autoinhibitory domain; that stretch reads DMNIPFDILIFRQMKAYLRSSSLRKAALRAL. Positions 437–457 are calmodulin binding (CaMBD); sequence SSSLRKAALRALSKTLIKDEI. EF-hand domains lie at 455 to 491, 492 to 527, 528 to 567, and 570 to 599; these read DEIL…ATEA, MKES…VHQH, ESLD…GPSI, and HSVL…VSVR. Residues Asn-470, Asp-472, Glu-516, Asp-545, Asn-547, Asn-549, Glu-556, Asp-581, and Lys-583 each contribute to the Ca(2+) site. Residue Ser-585 is modified to Phosphoserine.

The protein belongs to the protein kinase superfamily. Ser/Thr protein kinase family. CDPK subfamily. As to quaternary structure, binds calmodulin (CaM) in a calcium-dependent manner. Post-translationally, autophosphorylated.

It localises to the membrane. The enzyme catalyses L-seryl-[protein] + ATP = O-phospho-L-seryl-[protein] + ADP + H(+). It carries out the reaction L-threonyl-[protein] + ATP = O-phospho-L-threonyl-[protein] + ADP + H(+). Activated by calcium and calmodulin. Autophosphorylation may play an important role in the regulation of the kinase activity. May play a role in signal transduction pathways that involve calcium as a second messenger. This is CDPK-related kinase 8 (CRK8) from Arabidopsis thaliana (Mouse-ear cress).